Here is a 794-residue protein sequence, read N- to C-terminus: MNKVRPRYIIDRPAYSVELFNEEYEKKIRSYPIGGKARKLFSCSTSKIKNFIFRLFPILSWLPKYNIKGNLLNDALGGISAGTIQIPQGMAFALLANLPPVNGLYSSFFPLVVYFFMGGIPQMVPGTFAVISIIVGNVCLKLAPESHFQNVTSNGTITNIEAMNTARMHISATLACLTAIIQIALSFVQFGFVAIYLSESFIRGFMTAAGLQILISVLKYIFGVSIPPYSGVLAIIYTFIDICKELPKTNVASLIFALISTVLLIIVKELNMKFMHKIRFPIPMEIIIVIVATAVSGSFKLPERYHMNVVGHIPLGFPSPTVPNVTQWDEMVGTAFSLAIVGYVINLAMGRTLGAKHGFDVDANQEMLALGSGNFFGSFFFIHVICCALSVTLAVDGAGGKSQIASFFVMMSVMVTILALGTYLNPLPKSVLGALIAVNLKNSLKQLSDPFYLWKKSKLDCLVWLVSFFSTFILGLPYGLAVGVAFSILVVIFNTQFRNGSSLNQVTATDIYVNPKVYSKVQPIDGIKIVTYCSPLYFANSEIFRQKVIKKTGLDPGKVYLSKKKYLKQQEQELKKKEQKKKRGSLFMKNKTLSLQELQEDFDGVSPTDSNNNSTVNGTASAISYISSNTLTSGSQTTENVQNGFSTPAQTQDPIIAAPPIVNFHTVIIDMSGVCFVDLMGIKALGKLCTSFQRIGVNVYLADVQAQVYDDIENGGMFAEGSLDRKHLFITVHDAVLYAEANNTGIVNTDSKKKGAGDTEIYITDTQDEISEDYPNLEEAMFGSMFQTEIQTAL.

Residues 1-70 lie on the Cytoplasmic side of the membrane; sequence MNKVRPRYII…WLPKYNIKGN (70 aa). Residues 71-96 form a helical membrane-spanning segment; the sequence is LLNDALGGISAGTIQIPQGMAFALLA. Topologically, residues 97–100 are extracellular; it reads NLPP. Residues 101-109 traverse the membrane as a helical segment; the sequence is VNGLYSSFF. Topologically, residues 110 to 129 are cytoplasmic; it reads PLVVYFFMGGIPQMVPGTFA. A helical membrane pass occupies residues 130–142; it reads VISIIVGNVCLKL. The Extracellular segment spans residues 143 to 160; the sequence is APESHFQNVTSNGTITNI. Residues 161–189 form a helical membrane-spanning segment; sequence EAMNTARMHISATLACLTAIIQIALSFVQ. Residues 190 to 199 are Cytoplasmic-facing; the sequence is FGFVAIYLSE. The helical transmembrane segment at 200–222 threads the bilayer; it reads SFIRGFMTAAGLQILISVLKYIF. The Extracellular segment spans residues 223-235; sequence GVSIPPYSGVLAI. The helical intramembrane region spans 236–244; sequence IYTFIDICK. At 245–252 the chain is on the extracellular side; the sequence is ELPKTNVA. A helical membrane pass occupies residues 253–273; sequence SLIFALISTVLLIIVKELNMK. Residues 274 to 284 are Cytoplasmic-facing; the sequence is FMHKIRFPIPM. Residues 285-297 traverse the membrane as a helical segment; the sequence is EIIIVIVATAVSG. Topologically, residues 298 to 332 are extracellular; that stretch reads SFKLPERYHMNVVGHIPLGFPSPTVPNVTQWDEMV. The helical transmembrane segment at 333–356 threads the bilayer; it reads GTAFSLAIVGYVINLAMGRTLGAK. At 357 to 363 the chain is on the cytoplasmic side; sequence HGFDVDA. The helical transmembrane segment at 364–377 threads the bilayer; the sequence is NQEMLALGSGNFFG. At 378–388 the chain is on the extracellular side; it reads SFFFIHVICCA. A helical transmembrane segment spans residues 389-398; the sequence is LSVTLAVDGA. At 399–403 the chain is on the cytoplasmic side; that stretch reads GGKSQ. A helical membrane pass occupies residues 404–417; the sequence is IASFFVMMSVMVTI. Over 418–429 the chain is Extracellular; that stretch reads LALGTYLNPLPK. Residues 430-455 form a helical membrane-spanning segment; sequence SVLGALIAVNLKNSLKQLSDPFYLWK. The Cytoplasmic portion of the chain corresponds to 456–459; that stretch reads KSKL. A helical transmembrane segment spans residues 460–474; that stretch reads DCLVWLVSFFSTFIL. Over 475–477 the chain is Extracellular; the sequence is GLP. Residues 478-496 traverse the membrane as a helical segment; sequence YGLAVGVAFSILVVIFNTQ. At 497–794 the chain is on the cytoplasmic side; the sequence is FRNGSSLNQV…MFQTEIQTAL (298 aa). Residues 517 to 739 enclose the STAS domain; the sequence is VYSKVQPIDG…ITVHDAVLYA (223 aa).

The protein belongs to the SLC26A/SulP transporter (TC 2.A.53) family. Homodimer.

The protein localises to the cell membrane. The protein resides in the endomembrane system. The catalysed reaction is chloride(in) = chloride(out). It carries out the reaction hydrogencarbonate(in) + chloride(out) = hydrogencarbonate(out) + chloride(in). Inhibited by ammonium and thiosulfate. Its function is as follows. Ion transporter that can act both as an ion channel and anion exchanger. Mainly acts as a chloride channel, which mediate uncoupled chloride anion transport in an alternate-access mechanism where a saturable binding site is alternately exposed to either one or the other side of the membrane. Also acts as a DIDS- and thiosulfate- sensitive anion exchanger the exchange of chloride for bicarbonate ions across the cell membrane. The sequence is that of Solute carrier family 26 member 9 (slc26a9) from Xenopus tropicalis (Western clawed frog).